The sequence spans 860 residues: Alanine--tRNA ligase (860 aa).

Zn(2+) is bound by residues His563, His567, Cys665, and His669.

The protein belongs to the class-II aminoacyl-tRNA synthetase family. Requires Zn(2+) as cofactor.

Its subcellular location is the cytoplasm. It carries out the reaction tRNA(Ala) + L-alanine + ATP = L-alanyl-tRNA(Ala) + AMP + diphosphate. Catalyzes the attachment of alanine to tRNA(Ala) in a two-step reaction: alanine is first activated by ATP to form Ala-AMP and then transferred to the acceptor end of tRNA(Ala). Also edits incorrectly charged Ser-tRNA(Ala) and Gly-tRNA(Ala) via its editing domain. In Vibrio cholerae serotype O1 (strain ATCC 39315 / El Tor Inaba N16961), this protein is Alanine--tRNA ligase.